The following is a 157-amino-acid chain: 6,7-dimethyl-8-ribityllumazine synthase (157 aa).

5-amino-6-(D-ribitylamino)uracil contacts are provided by residues Phe-22, 57 to 59 (AYE), and 81 to 83 (TVI). 86-87 (GT) lines the (2S)-2-hydroxy-3-oxobutyl phosphate pocket. The Proton donor role is filled by His-89. 5-amino-6-(D-ribitylamino)uracil is bound at residue Phe-114. A (2S)-2-hydroxy-3-oxobutyl phosphate-binding site is contributed by Arg-128.

The protein belongs to the DMRL synthase family. As to quaternary structure, forms an icosahedral capsid composed of 60 subunits, arranged as a dodecamer of pentamers.

The catalysed reaction is (2S)-2-hydroxy-3-oxobutyl phosphate + 5-amino-6-(D-ribitylamino)uracil = 6,7-dimethyl-8-(1-D-ribityl)lumazine + phosphate + 2 H2O + H(+). It participates in cofactor biosynthesis; riboflavin biosynthesis; riboflavin from 2-hydroxy-3-oxobutyl phosphate and 5-amino-6-(D-ribitylamino)uracil: step 1/2. Functionally, catalyzes the formation of 6,7-dimethyl-8-ribityllumazine by condensation of 5-amino-6-(D-ribitylamino)uracil with 3,4-dihydroxy-2-butanone 4-phosphate. This is the penultimate step in the biosynthesis of riboflavin. This chain is 6,7-dimethyl-8-ribityllumazine synthase, found in Histophilus somni (strain 129Pt) (Haemophilus somnus).